The following is a 382-amino-acid chain: UDP-N-acetylglucosamine--N-acetylmuramyl-(pentapeptide) pyrophosphoryl-undecaprenol N-acetylglucosamine transferase (382 aa).

UDP-N-acetyl-alpha-D-glucosamine contacts are provided by residues 11–13 (TGG), asparagine 124, arginine 164, serine 192, and glutamine 314.

Belongs to the glycosyltransferase 28 family. MurG subfamily.

The protein resides in the cell membrane. The enzyme catalyses di-trans,octa-cis-undecaprenyl diphospho-N-acetyl-alpha-D-muramoyl-L-alanyl-D-glutamyl-meso-2,6-diaminopimeloyl-D-alanyl-D-alanine + UDP-N-acetyl-alpha-D-glucosamine = di-trans,octa-cis-undecaprenyl diphospho-[N-acetyl-alpha-D-glucosaminyl-(1-&gt;4)]-N-acetyl-alpha-D-muramoyl-L-alanyl-D-glutamyl-meso-2,6-diaminopimeloyl-D-alanyl-D-alanine + UDP + H(+). Its pathway is cell wall biogenesis; peptidoglycan biosynthesis. Functionally, cell wall formation. Catalyzes the transfer of a GlcNAc subunit on undecaprenyl-pyrophosphoryl-MurNAc-pentapeptide (lipid intermediate I) to form undecaprenyl-pyrophosphoryl-MurNAc-(pentapeptide)GlcNAc (lipid intermediate II). In Deinococcus deserti (strain DSM 17065 / CIP 109153 / LMG 22923 / VCD115), this protein is UDP-N-acetylglucosamine--N-acetylmuramyl-(pentapeptide) pyrophosphoryl-undecaprenol N-acetylglucosamine transferase.